The sequence spans 282 residues: Glutamate--LysW ligase ArgX (282 aa).

ATP contacts are provided by residues Lys-87, Lys-127, Gly-131–Val-137, and Gln-167–Arg-178. One can recognise an ATP-grasp domain in the interval Tyr-91–Lys-277. Arg-192 lines the substrate pocket. Asn-202 serves as a coordination point for ATP. A substrate-binding site is contributed by Ile-203 to Ala-204. Mg(2+) is bound by residues Asp-237, Glu-250, and Asn-252. Glu-256 to Phe-260 lines the substrate pocket. A GF motif that is essential for ArgX substrate specificity motif is present at residues Gly-259–Phe-260.

This sequence belongs to the RimK family. LysX subfamily. Homotetramer. Interacts with LysW. Mg(2+) serves as cofactor.

It catalyses the reaction [amino-group carrier protein]-C-terminal-L-glutamate + L-glutamate + ATP = [amino-group carrier protein]-C-terminal-gamma-(L-glutamyl)-L-glutamate + ADP + phosphate + H(+). It participates in amino-acid biosynthesis; L-arginine biosynthesis. In terms of biological role, catalyzes the ATP-dependent formation of a covalent bond between the amino group of glutamate and the gamma-carboxyl group of the C-terminal glutamate residue in LysW. The sequence is that of Glutamate--LysW ligase ArgX from Sulfolobus acidocaldarius (strain ATCC 33909 / DSM 639 / JCM 8929 / NBRC 15157 / NCIMB 11770).